Reading from the N-terminus, the 351-residue chain is Phosphate acyltransferase (351 aa).

This sequence belongs to the PlsX family. As to quaternary structure, homodimer. Probably interacts with PlsY.

Its subcellular location is the cytoplasm. It carries out the reaction a fatty acyl-[ACP] + phosphate = an acyl phosphate + holo-[ACP]. It functions in the pathway lipid metabolism; phospholipid metabolism. Its function is as follows. Catalyzes the reversible formation of acyl-phosphate (acyl-PO(4)) from acyl-[acyl-carrier-protein] (acyl-ACP). This enzyme utilizes acyl-ACP as fatty acyl donor, but not acyl-CoA. This is Phosphate acyltransferase from Neisseria meningitidis serogroup A / serotype 4A (strain DSM 15465 / Z2491).